A 488-amino-acid chain; its full sequence is Cytochrome P450 71A24 (488 aa).

Residues 3–23 traverse the membrane as a helical segment; the sequence is MMMMIILLLCSIILITILFFK. Cys-433 lines the heme pocket.

This sequence belongs to the cytochrome P450 family. It depends on heme as a cofactor.

It is found in the membrane. The polypeptide is Cytochrome P450 71A24 (CYP71A24) (Arabidopsis thaliana (Mouse-ear cress)).